A 410-amino-acid polypeptide reads, in one-letter code: Segmentation protein fushi tarazu (410 aa).

Disordered stretches follow at residues 71–93 (TQTV…KAED), 138–157 (PAVS…QEYV), and 175–221 (SPQS…SAVS). The span at 76–85 (PVQPTTPPPK) shows a compositional bias: pro residues. A compositionally biased stretch (pro residues) spans 190–199 (TPPPTTPTSL). Positions 254–313 (SKRTRQTYTRYQTLELEKEFHFNRYITRRRRIDIANALSLSERQIKIWFQNRRMKSKKDR) form a DNA-binding region, homeobox.

Belongs to the Antp homeobox family. Post-translationally, phosphorylated at as many as 16 sites. Expressed early in development in a striped pattern at the blastoderm stage. Later expressed in a specific subset of neuronal precursor cells, neurons and glia in the developing CNS. Between 5 and 6 hours of development, found in the midline precursor-2 cells in a segmentally repeating pattern. Expression in many other neuronal precursors follows and reaches a second peak of abundance at 9 hours of development. Expressed in the hindgut between 11-15 hours of development.

The protein resides in the nucleus. In terms of biological role, may play a role in determining neuronal identity, may be directly involved in specifying identity of individual neurons. Required during embryogenesis for the process of body segmentation. Homeotic protein, required in alternating segment primordia, it specifies the correct number of segments. This is Segmentation protein fushi tarazu (ftz) from Drosophila melanogaster (Fruit fly).